Consider the following 157-residue polypeptide: Large ribosomal subunit protein bL17 (157 aa).

The segment at 124-157 (AAPVVSKQDRAKRVKGSKKAESRSQENEGGDAAE) is disordered.

This sequence belongs to the bacterial ribosomal protein bL17 family. In terms of assembly, part of the 50S ribosomal subunit. Contacts protein L32.

This Chlorobaculum tepidum (strain ATCC 49652 / DSM 12025 / NBRC 103806 / TLS) (Chlorobium tepidum) protein is Large ribosomal subunit protein bL17.